We begin with the raw amino-acid sequence, 80 residues long: Conotoxin Cl10.1 (80 aa).

The N-terminal stretch at 1–20 (MTTLGMTMLVLLLLLPLATC) is a signal peptide. Residues 21–36 (LGDGERSPWDSLLRAL) constitute a propeptide that is removed on maturation.

Post-translationally, contains 4 disulfide bonds. Expressed by the venom duct.

It localises to the secreted. The protein is Conotoxin Cl10.1 of Californiconus californicus (California cone).